A 208-amino-acid chain; its full sequence is Uracil phosphoribosyltransferase (208 aa).

Residues arginine 78, arginine 103, and 130-138 (DPMLATGGS) each bind 5-phospho-alpha-D-ribose 1-diphosphate. Uracil contacts are provided by residues isoleucine 193 and 198 to 200 (GDA). Aspartate 199 provides a ligand contact to 5-phospho-alpha-D-ribose 1-diphosphate.

This sequence belongs to the UPRTase family. Mg(2+) is required as a cofactor.

It catalyses the reaction UMP + diphosphate = 5-phospho-alpha-D-ribose 1-diphosphate + uracil. The protein operates within pyrimidine metabolism; UMP biosynthesis via salvage pathway; UMP from uracil: step 1/1. Allosterically activated by GTP. Its function is as follows. Catalyzes the conversion of uracil and 5-phospho-alpha-D-ribose 1-diphosphate (PRPP) to UMP and diphosphate. This is Uracil phosphoribosyltransferase from Aliivibrio salmonicida (strain LFI1238) (Vibrio salmonicida (strain LFI1238)).